Here is a 70-residue protein sequence, read N- to C-terminus: Eglin C (70 aa).

Belongs to the protease inhibitor I13 (potato type I serine protease inhibitor) family.

Inhibits both elastase and cathepsin G. In Hirudo medicinalis (Medicinal leech), this protein is Eglin C.